Here is a 144-residue protein sequence, read N- to C-terminus: Large ribosomal subunit protein uL15 (144 aa).

The segment covering 1–12 (MRLNTLSPSLGS) has biased composition (polar residues). The tract at residues 1–51 (MRLNTLSPSLGSRKNHKRLGRGIGSGFGKTAGRGHKGQKSRSGGHVNRGFE) is disordered. Gly residues predominate over residues 21 to 31 (RGIGSGFGKTA).

It belongs to the universal ribosomal protein uL15 family. In terms of assembly, part of the 50S ribosomal subunit.

Functionally, binds to the 23S rRNA. The chain is Large ribosomal subunit protein uL15 from Buchnera aphidicola subsp. Schizaphis graminum (strain Sg).